A 326-amino-acid chain; its full sequence is Metal-binding protein YtgA (326 aa).

The first 21 residues, Met1–Gly21, serve as a signal peptide directing secretion. Fe(2+) is bound by residues His75, His141, His207, and Asp299.

This sequence belongs to the bacterial solute-binding protein 9 family. Monomer.

The protein localises to the periplasm. Its function is as follows. Part of the ATP-binding cassette (ABC) transport system YtgABCD involved in metal import. Binds Fe(2+), Mn(2+) and Ni(2+), with a preference for Fe(2+) and delivers them to the membrane permease for translocation into the cytoplasm. This is Metal-binding protein YtgA from Chlamydia trachomatis serovar D (strain ATCC VR-885 / DSM 19411 / UW-3/Cx).